A 190-amino-acid chain; its full sequence is CASP-like protein 1E1 (190 aa).

A disordered region spans residues 1 to 23 (MEHESKNKVDGMEMEKGKKESGS). The Cytoplasmic segment spans residues 1 to 28 (MEHESKNKVDGMEMEKGKKESGSRKGLE). The chain crosses the membrane as a helical span at residues 29–49 (LTMRVLALVLTMVAATVLGVA). Topologically, residues 50–83 (KQTKVVPIKLIPTLPPLNVSTTAKASYLSAFVYN) are extracellular. The N-linked (GlcNAc...) asparagine glycan is linked to Asn-67. Residues 84–104 (ISANAIACGYTAISIVIVMIS) form a helical membrane-spanning segment. The Cytoplasmic portion of the chain corresponds to 105 to 111 (KGKRSKS). A helical membrane pass occupies residues 112-132 (LLMAVLIGDLMMVALLFSSTG). The Extracellular segment spans residues 133–163 (AAGAIGLMGRHGNKHVMWKKVCGVFGKFCNQ). A helical membrane pass occupies residues 164 to 184 (AAVSVAITLIASVVFMLLVVL). The Cytoplasmic portion of the chain corresponds to 185 to 190 (DALKLP).

This sequence belongs to the Casparian strip membrane proteins (CASP) family. In terms of assembly, homodimer and heterodimers.

Its subcellular location is the cell membrane. The polypeptide is CASP-like protein 1E1 (Arabidopsis thaliana (Mouse-ear cress)).